Here is a 498-residue protein sequence, read N- to C-terminus: Cytochrome P450 monooxygenase idtP (498 aa).

An N-terminal signal peptide occupies residues 1 to 20 (MFLLHILAIGACLLWYFVRS). C439 contributes to the heme binding site.

This sequence belongs to the cytochrome P450 family. Heme serves as cofactor.

It functions in the pathway secondary metabolite biosynthesis. In terms of biological role, cytochrome P450 monooxygenase; part of the gene cluster that mediates the biosynthesis of paspalitrems, indole-diterpene (IDT) mycotoxins that are potent tremorgens in mammals. The geranylgeranyl diphosphate (GGPP) synthase idtG is proposed to catalyze the first step in IDT biosynthesis via catalysis of a series of iterative condensations of isopentenyl diphosphate (IPP) with dimethylallyl diphosphate (DMAPP), geranyl diphosphate (GPP), and farnesyl diphosphate (FPP), to form GGPP. Condensation of indole-3-glycerol phosphate with GGPP by the prenyltransferase idtC then forms 3-geranylgeranylindole (3-GGI). Epoxidation of the two terminal alkenes of the geranylgeranyl moiety by the FAD-dependent monooxygenase idtM, and cyclization by the terpene cyclase idtB then leads to the production of paspaline. The cytochrome P450 monooxygenase idtP then catalyzes oxidative elimination of the pendant methyl group at C-12 of paspaline and generates the C-10 ketone to yield 13-desoxypaxilline. The cytochrome P450 monooxygenase idtQ may catalyze the C-13 oxidation of 13-desoxypaxilline to afford paxilline. Considering that both paspalicine and paxilline were detected in C.paspali, idtQ also catalyzes the formation of paspalinine from 13-desoxypaxilline via paspalicine as an intermediate. Finally, the alpha-prenyltransferase idtF prenylates paspalinine at the C-20 or the C-21 positions to yield paspalitrems A and C, respectively. The hydroxylation of paspalitrem A at C-32 by a still unknown oxidase affords paspalitrem B. This chain is Cytochrome P450 monooxygenase idtP, found in Claviceps paspali (Rye ergot fungus).